The primary structure comprises 380 residues: Opsin-2 (380 aa).

Residues 1–51 (MVNTTDFYPVPAAMAYESSVGLPLLGWNVPTEHLDLVHPHWRSFQVPNKYW) are Extracellular-facing. Asparagine 3 carries N-linked (GlcNAc...) asparagine glycosylation. The helical transmembrane segment at 52 to 76 (HFGLAFVYFMLMCMSSLGNGIVLWI) threads the bilayer. The Cytoplasmic portion of the chain corresponds to 77 to 88 (YATTKSIRTPSN). The helical transmembrane segment at 89-115 (MFIVNLALFDVLMLLEMPMLVVSSLFY) threads the bilayer. The Extracellular portion of the chain corresponds to 116-128 (QRPVGWELGCDIY). A disulfide bond links cysteine 125 and cysteine 202. Residues 129 to 148 (AALGSVAGIGSAINNAAIAF) form a helical membrane-spanning segment. The Cytoplasmic segment spans residues 149–166 (DRYRTISCPIDGRLTQGQ). A helical transmembrane segment spans residues 167–191 (VLALIAGTWVWTLPFTLMPLLRIWS). The Extracellular portion of the chain corresponds to 192-215 (RFTAEGFLTTCSFDYLTDDEDTKV). The helical transmembrane segment at 216-243 (FVGCIFAWSYAFPLCLICCFYYRLIGAV) threads the bilayer. At 244–279 (REHEKMLRDQAKKMNVKSLQSNADTEAQSAEIRIAK) the chain is on the cytoplasmic side. A helical transmembrane segment spans residues 280–303 (VALTIFFLFLCSWTPYAVVAMIGA). Residues 304 to 311 (FGNRAALT) lie on the Extracellular side of the membrane. The helical transmembrane segment at 312-336 (PLSTMIPAVTAKIVSCIDPWVYAIN) threads the bilayer. At lysine 323 the chain carries N6-(retinylidene)lysine. Topologically, residues 337–380 (HPRFRAEVQKRMKWLHLGEDARSSKSDTSSTATDRTVGNVSASA) are cytoplasmic. The interval 358-380 (RSSKSDTSSTATDRTVGNVSASA) is disordered. Over residues 362–372 (SDTSSTATDRT) the composition is skewed to low complexity.

This sequence belongs to the G-protein coupled receptor 1 family. Opsin subfamily. Post-translationally, phosphorylated on some or all of the serine and threonine residues present in the C-terminal region.

It localises to the membrane. In terms of biological role, visual pigments are the light-absorbing molecules that mediate vision. They consist of an apoprotein, opsin, covalently linked to cis-retinal. The sequence is that of Opsin-2 (Lo2) from Schistocerca gregaria (Desert locust).